We begin with the raw amino-acid sequence, 188 residues long: UPF0301 protein XCV3063 (188 aa).

The protein belongs to the UPF0301 (AlgH) family.

In Xanthomonas euvesicatoria pv. vesicatoria (strain 85-10) (Xanthomonas campestris pv. vesicatoria), this protein is UPF0301 protein XCV3063.